A 201-amino-acid polypeptide reads, in one-letter code: Adapter protein MecA 1 (201 aa).

Belongs to the MecA family. As to quaternary structure, homodimer.

Its function is as follows. Enables the recognition and targeting of unfolded and aggregated proteins to the ClpC protease or to other proteins involved in proteolysis. Acts negatively in the development of competence by binding ComK and recruiting it to the ClpCP protease. When overexpressed, inhibits sporulation. Also involved in Spx degradation by ClpC. This chain is Adapter protein MecA 1 (mecA1), found in Halalkalibacterium halodurans (strain ATCC BAA-125 / DSM 18197 / FERM 7344 / JCM 9153 / C-125) (Bacillus halodurans).